The sequence spans 347 residues: MNVRDFDFHLPEKLIAQTPLKDRTASRLLVLDKHTGAVEDKKFPDLLQFIEAGDCLVLNDTRVLPARLFGVKEETGAQVEVLLLKQMEGDRWETLVKPAKRLKVGTIIRFGNGELTATCVQELEHGGRVLEFSYEGIFHEVLDQLGEMPLPPYIKEQLDDKDRYQTVFAKNRGSAAAPTAGLHFTEELLDQLKQKGVHLAFITLHVGLGTFRPVSVEEIEEHEMHAEFYQMSAGTARLLNEVKRQGGRIIAVGTTSARTLETIRQEHDEFVETSGWTSIFIYPGYEFKGIDGLITNFHLPKSTLVMLVSALAGRENLLNAYAHAVKQSYRFFSFGDAMFIYDKKTNS.

It belongs to the QueA family. As to quaternary structure, monomer.

It localises to the cytoplasm. The enzyme catalyses 7-aminomethyl-7-carbaguanosine(34) in tRNA + S-adenosyl-L-methionine = epoxyqueuosine(34) in tRNA + adenine + L-methionine + 2 H(+). It participates in tRNA modification; tRNA-queuosine biosynthesis. Its function is as follows. Transfers and isomerizes the ribose moiety from AdoMet to the 7-aminomethyl group of 7-deazaguanine (preQ1-tRNA) to give epoxyqueuosine (oQ-tRNA). This is S-adenosylmethionine:tRNA ribosyltransferase-isomerase from Halalkalibacterium halodurans (strain ATCC BAA-125 / DSM 18197 / FERM 7344 / JCM 9153 / C-125) (Bacillus halodurans).